An 874-amino-acid polypeptide reads, in one-letter code: Alanine--tRNA ligase (874 aa).

Histidine 563, histidine 567, cysteine 665, and histidine 669 together coordinate Zn(2+).

It belongs to the class-II aminoacyl-tRNA synthetase family. The cofactor is Zn(2+).

Its subcellular location is the cytoplasm. The catalysed reaction is tRNA(Ala) + L-alanine + ATP = L-alanyl-tRNA(Ala) + AMP + diphosphate. Its function is as follows. Catalyzes the attachment of alanine to tRNA(Ala) in a two-step reaction: alanine is first activated by ATP to form Ala-AMP and then transferred to the acceptor end of tRNA(Ala). Also edits incorrectly charged Ser-tRNA(Ala) and Gly-tRNA(Ala) via its editing domain. The chain is Alanine--tRNA ligase from Haemophilus influenzae (strain ATCC 51907 / DSM 11121 / KW20 / Rd).